The primary structure comprises 363 residues: Cytochrome b (363 aa).

The next 4 helical transmembrane spans lie at 23–43, 67–89, 102–122, and 164–184; these read FGFILGILLVLQIISGLMLSF, WFVRLYHSFGVSFYFFFMFLHIM, SWYSGVVIFVLSIATAFVGYV, and FFSIHVILPVIILLVVIFHLY. Heme b is bound by residues histidine 73 and histidine 87. 2 residues coordinate heme b: histidine 168 and histidine 182. Residue histidine 187 participates in a ubiquinone binding. 4 helical membrane-spanning segments follow: residues 210–230, 271–291, 310–330, and 332–352; these read VLFSDIRFIVIVILLIGVQSG, VFPTKVAGLLAMAGMLELLVL, VWTTSSVPLVPVLFMLGSIGK, and VVHVDLIAIGTCVVLSVVLFI.

The protein belongs to the cytochrome b family. The main subunits of complex b-c1 are: cytochrome b, cytochrome c1 and the Rieske protein. Heme b is required as a cofactor.

The protein localises to the mitochondrion inner membrane. In terms of biological role, component of the ubiquinol-cytochrome c reductase complex (complex III or cytochrome b-c1 complex) that is part of the mitochondrial respiratory chain. The b-c1 complex mediates electron transfer from ubiquinol to cytochrome c. Contributes to the generation of a proton gradient across the mitochondrial membrane that is then used for ATP synthesis. This is Cytochrome b (MT-CYB) from Theileria annulata.